Here is a 361-residue protein sequence, read N- to C-terminus: DNA replication and repair protein RecF (361 aa).

Residue 30 to 37 (GANGSGKT) participates in ATP binding.

Belongs to the RecF family.

Its subcellular location is the cytoplasm. Its function is as follows. The RecF protein is involved in DNA metabolism; it is required for DNA replication and normal SOS inducibility. RecF binds preferentially to single-stranded, linear DNA. It also seems to bind ATP. The protein is DNA replication and repair protein RecF of Chromohalobacter salexigens (strain ATCC BAA-138 / DSM 3043 / CIP 106854 / NCIMB 13768 / 1H11).